A 78-amino-acid polypeptide reads, in one-letter code: Large ribosomal subunit protein bL28 (78 aa).

The tract at residues 1–22 (MAKVCQVTGKRPVTGHNVSHAK) is disordered.

This sequence belongs to the bacterial ribosomal protein bL28 family.

In Teredinibacter turnerae (strain ATCC 39867 / T7901), this protein is Large ribosomal subunit protein bL28.